Here is a 441-residue protein sequence, read N- to C-terminus: Arginine biosynthesis bifunctional protein ArgJ, mitochondrial (441 aa).

Residues Thr-178, Lys-204, Thr-215, Glu-304, Asn-436, and Ser-441 each contribute to the substrate site. Thr-215 serves as the catalytic Nucleophile.

This sequence belongs to the ArgJ family. Heterodimer of an alpha and a beta chain. Post-translationally, the alpha and beta chains are autoproteolytically processed from a single precursor protein within the mitochondrion.

The protein resides in the mitochondrion matrix. The catalysed reaction is N(2)-acetyl-L-ornithine + L-glutamate = N-acetyl-L-glutamate + L-ornithine. It catalyses the reaction L-glutamate + acetyl-CoA = N-acetyl-L-glutamate + CoA + H(+). Its pathway is amino-acid biosynthesis; L-arginine biosynthesis; L-ornithine and N-acetyl-L-glutamate from L-glutamate and N(2)-acetyl-L-ornithine (cyclic): step 1/1. The protein operates within amino-acid biosynthesis; L-arginine biosynthesis; N(2)-acetyl-L-ornithine from L-glutamate: step 1/4. In terms of biological role, catalyzes two activities which are involved in the cyclic version of arginine biosynthesis: the synthesis of acetylglutamate from glutamate and acetyl-CoA, and of ornithine by transacetylation between acetylornithine and glutamate. In Lodderomyces elongisporus (strain ATCC 11503 / CBS 2605 / JCM 1781 / NBRC 1676 / NRRL YB-4239) (Yeast), this protein is Arginine biosynthesis bifunctional protein ArgJ, mitochondrial.